Consider the following 117-residue polypeptide: Large ribosomal subunit protein uL18 (117 aa).

It belongs to the universal ribosomal protein uL18 family. Part of the 50S ribosomal subunit; part of the 5S rRNA/L5/L18/L25 subcomplex. Contacts the 5S and 23S rRNAs.

This is one of the proteins that bind and probably mediate the attachment of the 5S RNA into the large ribosomal subunit, where it forms part of the central protuberance. In Vibrio atlanticus (strain LGP32) (Vibrio splendidus (strain Mel32)), this protein is Large ribosomal subunit protein uL18.